The sequence spans 207 residues: Thymidylate kinase (207 aa).

12-19 (GVDGAGKS) serves as a coordination point for ATP.

It belongs to the thymidylate kinase family.

It catalyses the reaction dTMP + ATP = dTDP + ADP. Its function is as follows. Phosphorylation of dTMP to form dTDP in both de novo and salvage pathways of dTTP synthesis. The sequence is that of Thymidylate kinase from Bordetella petrii (strain ATCC BAA-461 / DSM 12804 / CCUG 43448).